The chain runs to 62 residues: Temporin-1PLa (62 aa).

The first 22 residues, 1–22 (MFTSKKSLLLLFFLGTINLSLC), serve as a signal peptide directing secretion. A propeptide spanning residues 23 to 45 (EEERDADEEERRDDPDEMNVEVE) is cleaved from the precursor. An Isoleucine amide modification is found at Ile60.

Expressed by the skin glands.

The protein localises to the secreted. Antimicrobial activity against the Gram-positive bacterium S.aureus. The sequence is that of Temporin-1PLa from Lithobates palustris (Pickerel frog).